A 1128-amino-acid polypeptide reads, in one-letter code: Membrane-associated guanylate kinase, WW and PDZ domain-containing protein 3 (1128 aa).

A PDZ 1 domain is found at Trp-22–Gly-108. One can recognise a Guanylate kinase-like domain in the interval Arg-116–Arg-290. Phe-123 to His-130 is a binding site for ATP. The tract at residues Thr-184 to Asn-276 is disordered. The span at Pro-193–Pro-204 shows a compositional bias: pro residues. The span at Leu-238 to Lys-247 shows a compositional bias: acidic residues. The span at Glu-257–Asp-267 shows a compositional bias: basic and acidic residues. 2 WW domains span residues Glu-295–Leu-328 and Gly-341–Leu-374. PDZ domains lie at Arg-412–Arg-494 and Thr-581–Arg-657. The disordered stretch occupies residues Gly-658–Gln-688. 2 consecutive PDZ domains span residues Asp-728–Arg-810 and Asp-852–Glu-939. 2 disordered regions span residues Glu-939–Val-985 and Leu-999–Gln-1018. Polar residues-rich tracts occupy residues Ser-946 to Ala-956 and Ala-965 to Arg-974. One can recognise a PDZ 6 domain in the interval Pro-1024–Thr-1106.

This sequence belongs to the MAGUK family.

Its subcellular location is the cell membrane. The protein resides in the cell junction. It is found in the tight junction. Its function is as follows. Acts as a scaffolding protein at cell-cell junctions, thereby regulating various cellular and signaling processes. The sequence is that of Membrane-associated guanylate kinase, WW and PDZ domain-containing protein 3 (MAGI3) from Gallus gallus (Chicken).